The primary structure comprises 388 residues: Succinate--CoA ligase [ADP-forming] subunit beta (388 aa).

Positions 9-244 (KEILRKFGVA…LDEEDPAEIE (236 aa)) constitute an ATP-grasp domain. ATP is bound by residues Lys46, 53 to 55 (GRG), Glu99, Ala102, and Glu107. Mg(2+)-binding residues include Asn199 and Asp213. Substrate-binding positions include Asn264 and 321–323 (GIM).

The protein belongs to the succinate/malate CoA ligase beta subunit family. Heterotetramer of two alpha and two beta subunits. Mg(2+) is required as a cofactor.

It carries out the reaction succinate + ATP + CoA = succinyl-CoA + ADP + phosphate. It catalyses the reaction GTP + succinate + CoA = succinyl-CoA + GDP + phosphate. The protein operates within carbohydrate metabolism; tricarboxylic acid cycle; succinate from succinyl-CoA (ligase route): step 1/1. Succinyl-CoA synthetase functions in the citric acid cycle (TCA), coupling the hydrolysis of succinyl-CoA to the synthesis of either ATP or GTP and thus represents the only step of substrate-level phosphorylation in the TCA. The beta subunit provides nucleotide specificity of the enzyme and binds the substrate succinate, while the binding sites for coenzyme A and phosphate are found in the alpha subunit. This chain is Succinate--CoA ligase [ADP-forming] subunit beta, found in Burkholderia vietnamiensis (strain G4 / LMG 22486) (Burkholderia cepacia (strain R1808)).